We begin with the raw amino-acid sequence, 72 residues long: Large ribosomal subunit protein bL31c (72 aa).

The protein belongs to the bacterial ribosomal protein bL31 family. Type A subfamily. In terms of assembly, part of the 50S ribosomal subunit.

The protein localises to the plastid. It is found in the chloroplast. Its function is as follows. Binds the 23S rRNA. The protein is Large ribosomal subunit protein bL31c of Guillardia theta (Cryptophyte).